The following is a 1783-amino-acid chain: MNLATRRRVRRTSRLVAKRALLLCILLYCTSFGFTQVLFEDVDVLQRLALRAELGSRAVPAGVISLRSGVILTTRARVTTPTRSLFPPELFWNCTIILSVRSHRLNSAFLFSVLSGNRIQLGLEISPGKLTLHAGPGNAATFLYNLHDGRWHHLAFVINGRSVTLHSPCSESDSGVTQELPVLPERLNPRGTFRLGGSSALLPGVVPFEGAVCQFDVVPSAQAQQNICSAIRRQCRENDTYRPAPPALLPLPSRHAPPLLAHTLPPNRTFTFTPTNFLLAPVNGAGGSSSVRMSDGVRPKPSSTTPPPLALMQTGIDAPLSLSLVTHKPSLRTPKPTASKPGVWLTPTKPARPKPTPGKASPKLNVSKSFGPKPTARLAASKLGSKAIGPKPTPLKPSKPVKKPTSVPKPNPTKNASIGPRPTNSNKKQNAILKPLPAPKPTVPKRPSPTNKKPLQPKNKSHTTPLTPKSTLAPNSTSKKPLPTLKSTSFTTAAPNKPPKTLETPKVNPDKSKTPVPYSTPRTPRFSIQSVTLPAFDDFQSFEVEPTRFSLLVGAPGLKGDQGESGLPGPPGKPGQPGMRGPRGPPGPHGKPGRPGPTGLKGKKGDPGLSPGKAPKGDKGDVGLPGPVGLVGVEGRKGQKGHPGPPGLPGEPGEQGPVGEAGAKGYPGRQGLPGPIGPVGPKGARGFIGIPGLFGLPGADGERGSPGPPGKRGKMGRPGFPGDFGERGPPGLDGEPGVIGAPGPPGVLGLIGDMGPAGTVGVPGLNGLKGVPGNMGESGLKGDKGDVGLPGEQGEIGFQGDKGVQGLPGLPGPRGKPGPQGKTGEIGPSGLPGPPGPEGFPGDIGKPGLNGPEGPKGKPGARGLPGPRGAAGREGDEGPLGPPGPFGLEGQMGSKGFPGALGLEGVKGEQGVTGKAGPMGERGLVGFIGPGGEAGLAGEKGDRGEMGLPGPPGEKGSTGHPGTPGEGGPPGPPGSPGSPGSRGPIGIRGPKGRRGPRGPDGVPGEIGTEGKKGPDGPPGKIGFPGHAGKIGESGEVGPKGFPGIQGPSGATGDKGIAGEPGPSGPPGTLGPQGNPGPKGPAGKVGDSGLPGEPGEKGSIGLAGNAGAAGLIGARGEPGLEGEAGPAGPDGTKGEKGDMGTEGEQGVRGDPGIKGKDGPPGDPGLTGVRGPEGKSGKSGERGKPGLKGAKGNIGHLGETGSVGKIGPIGTTGPKGSRGTIGHAGAPGRMGLQGDPGISGYEGHKGPQGPIGPPGPKGAKGEQGDDGKVEGPTGAPGLRGPVGKRGDRGEPGDPGYVGQQGVDGLRGKPGAPGLPGDPGPRGTQGPKGSKGEQGQKGKQGQQGERGSRGSPGVVGLPGPRGTVGREGREGFPGTDGLAGKDGSRGTPGDQGDDGEFGLPGKPGAPGKVGVIGLPGPQGSFGPKGERGLPGHPGPSGKRGFKGGMGLPGPQGDRGSKGQPGDIGEPGFPGMLGMFGPKGPPGDFGPKGIQGPKGPQGNMGRGGLAGPVGVIGPIGNPGSRGDTGNKGELGVQGPRGAPGPRGPPGLPGPPGIPLAMNQDFGLGVVQPVFRETHTQKIEGRGLLDMPMLDQAPEILRTLDYLSSLVHSLKNPLGTRDHPARLCRDLHDCRDTLYDGTYWIDPNLGCSSDSIEVMCNFSSGGRTCLRPITTAKLEFSVGRVQMNFLHLLSAGAEQRITIHCLNVTIWSHAPNQPPSQNAVQFHSWIGEVLEPDVLEDTCWQLNGRWQHADFLFRVLDPALLPVVRISNLPKVMPSSRFHLEVGPVCFL.

The first 35 residues, 1-35 (MNLATRRRVRRTSRLVAKRALLLCILLYCTSFGFT), serve as a signal peptide directing secretion. In terms of domain architecture, Laminin G-like spans 73–235 (TTRARVTTPT…NICSAIRRQC (163 aa)). Disordered stretches follow at residues 288–312 (SSSVRMSDGVRPKPSSTTPPPLALM), 327–524 (HKPS…PRTP), 553–744 (VGAP…APGP), 772–1461 (PGNM…GDIG), and 1512–1546 (GNPGSRGDTGNKGELGVQGPRGAPGPRGPPGLPGP). The segment covering 403–415 (KPTSVPKPNPTKN) has biased composition (low complexity). Positions 436–447 (LPAPKPTVPKRP) are enriched in pro residues. The segment covering 462–494 (HTTPLTPKSTLAPNSTSKKPLPTLKSTSFTTAA) has biased composition (polar residues). Positions 553–1547 (VGAPGLKGDQ…RGPPGLPGPP (995 aa)) are triple-helical region. In terms of domain architecture, Collagen-like 1 spans 554-608 (GAPGLKGDQGESGLPGPPGKPGQPGMRGPRGPPGPHGKPGRPGPTGLKGKKGDPG). Low complexity-rich tracts occupy residues 622-633 (VGLPGPVGLVGV), 651-661 (EPGEQGPVGEA), 735-744 (EPGVIGAPGP), 817-829 (PGPQGKTGEIGPS), and 861-870 (ARGLPGPRGA). 2 consecutive Collagen-like domains span residues 818–873 (GPQG…AAGR) and 845–902 (GKPG…GALG). Gly residues predominate over residues 926–935 (GFIGPGGEAG). The segment covering 967–976 (GGPPGPPGSP) has biased composition (pro residues). Low complexity-rich tracts occupy residues 978–988 (SPGSRGPIGIR) and 1098–1129 (SIGLAGNAGAAGLIGARGEPGLEGEAGPAGPD). A Collagen-like 4 domain is found at 986–1043 (GIRGPKGRRGPRGPDGVPGEIGTEGKKGPDGPPGKIGFPGHAGKIGESGEVGPKGFPG). 3 stretches are compositionally biased toward basic and acidic residues: residues 1131–1158 (TKGEKGDMGTEGEQGVRGDPGIKGKDGP), 1170–1182 (PEGKSGKSGERGK), and 1257–1267 (AKGEQGDDGKV). The Collagen-like 5 domain maps to 1269–1326 (GPTGAPGLRGPVGKRGDRGEPGDPGYVGQQGVDGLRGKPGAPGLPGDPGPRGTQGPKG). Low complexity-rich tracts occupy residues 1334–1349 (KGKQGQQGERGSRGSP) and 1396–1409 (LPGKPGAPGKVGVI). Collagen-like domains follow at residues 1446–1503 (GPQG…GLAG) and 1497–1549 (GRGG…PPGI). Pro residues predominate over residues 1537–1546 (PRGPPGLPGP). The propeptide at 1551 to 1783 (LAMNQDFGLG…HLEVGPVCFL (233 aa)) is C-terminal propeptide. Residues 1589-1783 (PEILRTLDYL…HLEVGPVCFL (195 aa)) enclose the Fibrillar collagen NC1 domain. 3 cysteine pairs are disulfide-bonded: Cys-1619–Cys-1651, Cys-1660–Cys-1781, and Cys-1696–Cys-1734. 4 residues coordinate Ca(2+): Asp-1637, Asn-1639, Cys-1642, and Asp-1645. Asn-1698 carries N-linked (GlcNAc...) asparagine glycosylation.

Belongs to the fibrillar collagen family. As to expression, expressed dynamically in the notochord from late epiboly, spreading to the anterior notochord by 24 hpf, and then throughout the notochord by 30 hpf. Subsequently, notochordal expression becomes restricted to the distal tip of the tail by 48 hpf and is no longer detectable by 72 hpf. Also expressed throughout the floor plate and hypochord at 24 hpf, and in forming head cartilages and the first forming tooth.

The protein localises to the secreted. It localises to the extracellular space. It is found in the extracellular matrix. In terms of biological role, may play a role during the calcification of cartilage and the transition of cartilage to bone. Together with col27a1b, plays a role in development of the notochord and axial skeleton. The protein is Collagen alpha-1(XXVII) chain A of Danio rerio (Zebrafish).